Here is a 165-residue protein sequence, read N- to C-terminus: Crossover junction endodeoxyribonuclease RuvC (165 aa).

Active-site residues include aspartate 8, glutamate 67, and aspartate 139. The Mg(2+) site is built by aspartate 8, glutamate 67, and aspartate 139.

Belongs to the RuvC family. In terms of assembly, homodimer which binds Holliday junction (HJ) DNA. The HJ becomes 2-fold symmetrical on binding to RuvC with unstacked arms; it has a different conformation from HJ DNA in complex with RuvA. In the full resolvosome a probable DNA-RuvA(4)-RuvB(12)-RuvC(2) complex forms which resolves the HJ. It depends on Mg(2+) as a cofactor.

Its subcellular location is the cytoplasm. It carries out the reaction Endonucleolytic cleavage at a junction such as a reciprocal single-stranded crossover between two homologous DNA duplexes (Holliday junction).. Its function is as follows. The RuvA-RuvB-RuvC complex processes Holliday junction (HJ) DNA during genetic recombination and DNA repair. Endonuclease that resolves HJ intermediates. Cleaves cruciform DNA by making single-stranded nicks across the HJ at symmetrical positions within the homologous arms, yielding a 5'-phosphate and a 3'-hydroxyl group; requires a central core of homology in the junction. The consensus cleavage sequence is 5'-(A/T)TT(C/G)-3'. Cleavage occurs on the 3'-side of the TT dinucleotide at the point of strand exchange. HJ branch migration catalyzed by RuvA-RuvB allows RuvC to scan DNA until it finds its consensus sequence, where it cleaves and resolves the cruciform DNA. The protein is Crossover junction endodeoxyribonuclease RuvC of Alkalilimnicola ehrlichii (strain ATCC BAA-1101 / DSM 17681 / MLHE-1).